A 336-amino-acid polypeptide reads, in one-letter code: tRNA N6-adenosine threonylcarbamoyltransferase (336 aa).

Fe cation is bound by residues H114 and H118. Substrate-binding positions include 136-140, D169, G182, D186, and N275; that span reads LVSGG. Fe cation is bound at residue D301.

The protein belongs to the KAE1 / TsaD family. Fe(2+) is required as a cofactor.

It is found in the cytoplasm. It catalyses the reaction L-threonylcarbamoyladenylate + adenosine(37) in tRNA = N(6)-L-threonylcarbamoyladenosine(37) in tRNA + AMP + H(+). In terms of biological role, required for the formation of a threonylcarbamoyl group on adenosine at position 37 (t(6)A37) in tRNAs that read codons beginning with adenine. Is involved in the transfer of the threonylcarbamoyl moiety of threonylcarbamoyl-AMP (TC-AMP) to the N6 group of A37, together with TsaE and TsaB. TsaD likely plays a direct catalytic role in this reaction. This Streptococcus pneumoniae (strain Taiwan19F-14) protein is tRNA N6-adenosine threonylcarbamoyltransferase.